The sequence spans 230 residues: Cysteine S-methyltransferase OspZ (230 aa).

Positions 49 to 52 (GITR) are interaction with host proteins TAB2, TAB3 and ZRANB3. S-adenosyl-L-methionine-binding residues include Ala-92, Ser-98, Arg-107, Gln-111, Tyr-204, and Glu-208.

Belongs to the NleE/OspZ family. As to quaternary structure, monomer.

Its subcellular location is the secreted. It localises to the host cytoplasm. The protein resides in the host nucleus. The catalysed reaction is L-cysteinyl-[protein] + S-adenosyl-L-methionine = S-methyl-L-cysteinyl-[protein] + S-adenosyl-L-homocysteine + H(+). Its function is as follows. Cysteine methyltransferase effector that inhibits host cell NF-kappa-B activation by preventing nuclear translocation of host protein RELA/p65. Acts by mediating cysteine methylation of host proteins TAB2 and TAB3: methylation of a conserved cysteine residue of the RanBP2-type zinc finger (NZF) of TAB2 and TAB3 disrupts zinc-binding, thereby inactivating the ubiquitin chain-binding activity of TAB2 and TAB3, leading to NF-kappa-B inactivation. Also mediates cysteine methylation of host protein ZRANB3, inactivating its ability to bind ubiquitin chains. In Shigella boydii, this protein is Cysteine S-methyltransferase OspZ.